The primary structure comprises 198 residues: Cytokinin riboside 5'-monophosphate phosphoribohydrolase (198 aa).

Residues Glu-91, 109 to 110 (RK), 126 to 132 (GVGTAEE), and Thr-138 contribute to the substrate site.

It belongs to the LOG family.

It carries out the reaction N(6)-(dimethylallyl)adenosine 5'-phosphate + H2O = N(6)-dimethylallyladenine + D-ribose 5-phosphate. It catalyses the reaction 9-ribosyl-trans-zeatin 5'-phosphate + H2O = trans-zeatin + D-ribose 5-phosphate. Its function is as follows. Catalyzes the hydrolytic removal of ribose 5'-monophosphate from nitrogen N6-modified adenosines, the final step of bioactive cytokinin synthesis. This chain is Cytokinin riboside 5'-monophosphate phosphoribohydrolase (fas6), found in Rhodococcoides fascians (Rhodococcus fascians).